The following is a 680-amino-acid chain: DNA-directed RNA polymerase subunit beta' (680 aa).

C69, C71, C87, and C90 together coordinate Zn(2+). Mg(2+) is bound by residues D489, D491, and D493.

Belongs to the RNA polymerase beta' chain family. RpoC1 subfamily. In terms of assembly, in plastids the minimal PEP RNA polymerase catalytic core is composed of four subunits: alpha, beta, beta', and beta''. When a (nuclear-encoded) sigma factor is associated with the core the holoenzyme is formed, which can initiate transcription. It depends on Mg(2+) as a cofactor. Zn(2+) is required as a cofactor.

The protein resides in the plastid. The protein localises to the chloroplast. The catalysed reaction is RNA(n) + a ribonucleoside 5'-triphosphate = RNA(n+1) + diphosphate. Its function is as follows. DNA-dependent RNA polymerase catalyzes the transcription of DNA into RNA using the four ribonucleoside triphosphates as substrates. The sequence is that of DNA-directed RNA polymerase subunit beta' from Carica papaya (Papaya).